The following is a 1673-amino-acid chain: Protein-methionine sulfoxide oxidase mical3b (1673 aa).

The segment at 2-492 is monooxygenase domain; that stretch reads WDGQSEMCQA…RHLIDTGEGP (491 aa). FAD is bound by residues cysteine 96, 96–124, glutamate 115, arginine 117, arginine 122, asparagine 124, and aspartate 396; that span reads CGLRTAIELGFLGARVVLVEKRDAFSRNN. The 107-residue stretch at 512–618 folds into the Calponin-homology (CH) domain; the sequence is MARYSKLLSW…YLSQLHELLK (107 aa). The tract at residues 647–714 is disordered; sequence SKLGQSLSRK…PKASEGHSKV (68 aa). Over residues 661–671 the composition is skewed to basic and acidic residues; it reads DKKEKEADSVG. The 63-residue stretch at 791 to 853 folds into the LIM zinc-binding domain; it reads DVCYFCGRRV…KHHFSFRLAS (63 aa). The span at 882-892 shows a compositional bias: low complexity; it reads LSSLGSVGTAT. Disordered stretches follow at residues 882-901, 918-938, 951-1100, 1159-1188, and 1357-1393; these read LSSLGSVGTATPDSWSSSTH, RIELENYKPSPQKQDSPLQEV, SLQE…KRSE, QSARICDSSTQTHSVTDLQETSPLGPTDGD, and GPDADGDVKEKKRSSLFSPRKSRKNGNAAAESGRETG. Basic and acidic residues predominate over residues 973–992; it reads LVWKKGEELHARTNGERKLD. Acidic residues-rich tracts occupy residues 993–1002 and 1010–1041; these read LEEELKEEEG and EGEEEGEVSEEEQDEGDSSDESYEGCSDDPDI. Residues 1081–1094 are compositionally biased toward low complexity; that stretch reads SDLTPDPSTTPESS. The span at 1159–1182 shows a compositional bias: polar residues; the sequence is QSARICDSSTQTHSVTDLQETSPL. Coiled coils occupy residues 1475 to 1531 and 1573 to 1638; these read EEEL…AVEK and QEKN…VEQR. A bMERB domain is found at 1495-1661; it reads KQEELRRLHR…EKEEDSDLEA (167 aa).

This sequence belongs to the Mical family. It depends on FAD as a cofactor.

The protein localises to the cytoplasm. Its subcellular location is the cytoskeleton. The protein resides in the nucleus. It carries out the reaction L-methionyl-[F-actin] + NADPH + O2 + H(+) = L-methionyl-(R)-S-oxide-[F-actin] + NADP(+) + H2O. Functionally, monooxygenase that promotes depolymerization of F-actin by mediating oxidation of specific methionine residues on actin. Acts by modifying actin subunits through the addition of oxygen to form methionine-sulfoxide, leading to promote actin filament severing and prevent repolymerization. Involved in exocytic vesicles tethering and fusion: the monooxygenase activity is required for this process. The polypeptide is Protein-methionine sulfoxide oxidase mical3b (mical3b) (Danio rerio (Zebrafish)).